A 410-amino-acid polypeptide reads, in one-letter code: Alanine racemase (410 aa).

Residues 28–76 enclose the RPE1 insert domain; that stretch reads VDFLHNVANKEEFAGNTSPRTAAYTLVREDASLGSTPKLPLGASYAKNL. K83 acts as the Proton acceptor; specific for D-alanine in catalysis. Position 83 is an N6-(pyridoxal phosphate)lysine (K83). R182 serves as a coordination point for substrate. Y305 acts as the Proton acceptor; specific for L-alanine in catalysis. M353 lines the substrate pocket.

The protein belongs to the alanine racemase family. Requires pyridoxal 5'-phosphate as cofactor.

The catalysed reaction is L-alanine = D-alanine. Its pathway is amino-acid biosynthesis; D-alanine biosynthesis; D-alanine from L-alanine: step 1/1. Its function is as follows. Catalyzes the interconversion of L-alanine and D-alanine. May also act on other amino acids. In Rickettsia bellii (strain RML369-C), this protein is Alanine racemase (alr).